We begin with the raw amino-acid sequence, 458 residues long: MIDYMEHVLRSFEQCTGWNRDNSYENVTATSENLLSFRVPSGVKFQVSNKSTPNTFTTFELSNNKVINGSLAYLYTNCQGLENYVSNSRDILLQEASETYRQIRPLYPCHSLRSSSDGAKEFGPSSLWYGRMYYPTSTLEAMVVSRSSAQTQFVAKCISSLANASVLTLYWQKDSGQNCQEWVASTNEGLLGYRILHNFVGSQSKLNTSLYNDSSLSVGGELWFGVLNTTPACSTTLRYCTHSANTGKPLTLTLSWNPLFGHVSSTYSVKTSSGATFSSKYDFNLYSIESNLSFGCDLWRRGHTKQLDQRRTEPLDAPNTNSSVFSKERVQKKQGPKEDSPMFYHLMAGSTSSQKLIEDLNVTFASSLQKLTKEKSTIQRFENSLIDANFASVWKLSTSLRHKNLRVLWEGKYKGFLISAGAEFTGAPLELPSNLAGESKTPALIRPGKFGIQLQYST.

The interval 307–339 (LDQRRTEPLDAPNTNSSVFSKERVQKKQGPKED) is disordered. The span at 326-339 (SKERVQKKQGPKED) shows a compositional bias: basic and acidic residues.

It belongs to the MDM10 family. As to quaternary structure, component of the ER-mitochondria encounter structure (ERMES) or MDM complex, composed of MMM1, MDM10, MDM12 and MDM34. Associates with the mitochondrial outer membrane sorting assembly machinery SAM(core) complex.

The protein resides in the mitochondrion outer membrane. Functionally, component of the ERMES/MDM complex, which serves as a molecular tether to connect the endoplasmic reticulum and mitochondria. Components of this complex are involved in the control of mitochondrial shape and protein biogenesis and may function in phospholipid exchange. MDM10 is involved in the late assembly steps of the general translocase of the mitochondrial outer membrane (TOM complex). Functions in the TOM40-specific route of the assembly of outer membrane beta-barrel proteins, including the association of TOM40 with the receptor TOM22 and small TOM proteins. Can associate with the SAM(core) complex as well as the MDM12-MMM1 complex, both involved in late steps of the major beta-barrel assembly pathway, that is responsible for biogenesis of all outer membrane beta-barrel proteins. May act as a switch that shuttles between both complexes and channels precursor proteins into the TOM40-specific pathway. Plays a role in mitochondrial morphology and in the inheritance of mitochondria. The protein is Mitochondrial distribution and morphology protein 10 of Lachancea thermotolerans (strain ATCC 56472 / CBS 6340 / NRRL Y-8284) (Yeast).